Consider the following 57-residue polypeptide: Small ribosomal subunit protein eS31 (57 aa).

Residues C29, C32, C47, and C50 each contribute to the Zn(2+) site. A C4-type zinc finger spans residues C29 to C50.

This sequence belongs to the eukaryotic ribosomal protein eS31 family. In terms of assembly, part of the 30S ribosomal subunit. It depends on Zn(2+) as a cofactor.

The protein is Small ribosomal subunit protein eS31 of Nitrosopumilus maritimus (strain SCM1).